Consider the following 424-residue polypeptide: Nuclear hormone receptor family member nhr-55 (424 aa).

Low complexity predominate over residues 1-19; sequence MNSPSSSSSFCSSSSSPSS. The segment at 1–20 is disordered; it reads MNSPSSSSSFCSSSSSPSSL. A DNA-binding region (nuclear receptor) is located at residues 25–100; that stretch reads PDTCQVCGQK…VGMTIENFQF (76 aa). NR C4-type zinc fingers lie at residues 28-55 and 64-88; these read CQVC…FRRC and CRRN…LKKC. The 256-residue stretch at 169-424 folds into the NR LBD domain; sequence EVPLHTPNAL…FSHPEVFIDL (256 aa).

This sequence belongs to the nuclear hormone receptor family.

Its subcellular location is the nucleus. Its function is as follows. Orphan nuclear receptor. The sequence is that of Nuclear hormone receptor family member nhr-55 (nhr-55) from Caenorhabditis elegans.